A 578-amino-acid polypeptide reads, in one-letter code: Thiol:disulfide interchange protein DsbD (578 aa).

An N-terminal signal peptide occupies residues 1-24 (MAQRFITLILLLCSILLAPHSAQA). 2 cysteine pairs are disulfide-bonded: cysteine 134–cysteine 140 and cysteine 195–cysteine 317. The next 9 helical transmembrane spans lie at 183-203 (ALLIGIGIAFTPCVLPMYPLI), 219-239 (ILLLAIVYVQGMALTYTLLGL), 256-276 (YVLIGLSALFVLLALSMFGLY), 297-317 (GGSLAGVFAMGALAGLICSPC), 318-338 (TTAPLSAILLYIAQSGNMLAG), 339-359 (GGTLYLYALGMGIPLVIVTLF), 370-390 (WMQYVKEAFGFVILALPVFLL), 397-417 (VWGLRLWSLLAIAFFGWAFIL), and 421-441 (AHSGWARAFQLLLLAALLIAA). The Thioredoxin domain maps to 438–578 (LIAARPLQDW…FLQHLQNLPR (141 aa)). Residues cysteine 493 and cysteine 496 are joined by a disulfide bond.

This sequence belongs to the thioredoxin family. DsbD subfamily.

It localises to the cell inner membrane. It carries out the reaction [protein]-dithiol + NAD(+) = [protein]-disulfide + NADH + H(+). The enzyme catalyses [protein]-dithiol + NADP(+) = [protein]-disulfide + NADPH + H(+). Its function is as follows. Required to facilitate the formation of correct disulfide bonds in some periplasmic proteins and for the assembly of the periplasmic c-type cytochromes. Acts by transferring electrons from cytoplasmic thioredoxin to the periplasm. This transfer involves a cascade of disulfide bond formation and reduction steps. The chain is Thiol:disulfide interchange protein DsbD from Yersinia enterocolitica serotype O:8 / biotype 1B (strain NCTC 13174 / 8081).